The following is a 172-amino-acid chain: Adenine phosphoribosyltransferase (172 aa).

The protein belongs to the purine/pyrimidine phosphoribosyltransferase family. As to quaternary structure, homodimer.

It localises to the cytoplasm. The catalysed reaction is AMP + diphosphate = 5-phospho-alpha-D-ribose 1-diphosphate + adenine. The protein operates within purine metabolism; AMP biosynthesis via salvage pathway; AMP from adenine: step 1/1. In terms of biological role, catalyzes a salvage reaction resulting in the formation of AMP, that is energically less costly than de novo synthesis. The sequence is that of Adenine phosphoribosyltransferase from Streptococcus equi subsp. zooepidemicus (strain H70).